The sequence spans 296 residues: Giardin subunit alpha-3 (296 aa).

Annexin repeat units lie at residues 3–72 (DTVT…SNCW), 74–146 (ELPV…TWIK), 153–222 (NNIN…TAHY), and 226–295 (GMNN…VLWR).

This sequence belongs to the annexin family. Giardin subunit alpha subfamily.

It is found in the cytoplasm. Its subcellular location is the cytoskeleton. Its function is as follows. Giardins are involved in parasite attachment to the intestinal mucosa and in the cytoskeletal disassembly and reassembly that marks the transition from infectious trophozoite to transmissible cyst. They may interact with other cytoskeletal proteins such as microtubules in the microribbons or crossbridges, to maintain the integrity of the ventral disk. The chain is Giardin subunit alpha-3 from Giardia intestinalis (Giardia lamblia).